The chain runs to 156 residues: ATP synthase subunit b (156 aa).

A helical membrane pass occupies residues 7-27; that stretch reads FFAQMVVFFILWWVVAKFIWP.

Belongs to the ATPase B chain family. In terms of assembly, F-type ATPases have 2 components, F(1) - the catalytic core - and F(0) - the membrane proton channel. F(1) has five subunits: alpha(3), beta(3), gamma(1), delta(1), epsilon(1). F(0) has three main subunits: a(1), b(2) and c(10-14). The alpha and beta chains form an alternating ring which encloses part of the gamma chain. F(1) is attached to F(0) by a central stalk formed by the gamma and epsilon chains, while a peripheral stalk is formed by the delta and b chains.

Its subcellular location is the cell inner membrane. In terms of biological role, f(1)F(0) ATP synthase produces ATP from ADP in the presence of a proton or sodium gradient. F-type ATPases consist of two structural domains, F(1) containing the extramembraneous catalytic core and F(0) containing the membrane proton channel, linked together by a central stalk and a peripheral stalk. During catalysis, ATP synthesis in the catalytic domain of F(1) is coupled via a rotary mechanism of the central stalk subunits to proton translocation. Component of the F(0) channel, it forms part of the peripheral stalk, linking F(1) to F(0). The polypeptide is ATP synthase subunit b (Cupriavidus metallidurans (strain ATCC 43123 / DSM 2839 / NBRC 102507 / CH34) (Ralstonia metallidurans)).